The sequence spans 854 residues: DNA mismatch repair protein MutS (854 aa).

An ATP-binding site is contributed by Gly-616 to Ser-623.

It belongs to the DNA mismatch repair MutS family.

Functionally, this protein is involved in the repair of mismatches in DNA. It is possible that it carries out the mismatch recognition step. This protein has a weak ATPase activity. The sequence is that of DNA mismatch repair protein MutS from Pectobacterium atrosepticum (strain SCRI 1043 / ATCC BAA-672) (Erwinia carotovora subsp. atroseptica).